The chain runs to 539 residues: Cytochrome P450 monooxygenase pvhE (539 aa).

A helical membrane pass occupies residues 15–31; that stretch reads VAFCSLVILCILFKVLT. N-linked (GlcNAc...) asparagine glycosylation occurs at Asn379. Heme is bound at residue Cys473.

Belongs to the cytochrome P450 family. Requires heme as cofactor.

Its subcellular location is the membrane. It participates in secondary metabolite biosynthesis. Its function is as follows. Cytochrome P450 monooxygenase; part of the gene cluster that mediates the biosynthesis of varicidin A, an antifungal natural product containing a cis-octahydrodecalin core. The PKS module of pvhA together with the enoylreductase pvhC catalyze the formation of the polyketide unit which is then conjugated to L-isoleucine by the condensation domain of the NRPS module. Activity of the Dieckmann cyclase domain (RED) of pvhA results in release of an acyclic tetramate. The cytochrome P450 monooxygenase pvhE then catalyzes the oxidation of the C21 methyl group to a to carboxylate group. The methyltransferase pvhD then further methylates the pvhE product. The Diels-Alderase pvhB is able to catalyze Diels-Alder cycloaddition using both pvhE and pvhD products as substrates to form the decalin ring, yielding varicidin B and A, respectively. In Talaromyces variabilis (Penicillium variabile), this protein is Cytochrome P450 monooxygenase pvhE.